Reading from the N-terminus, the 506-residue chain is Ribose import ATP-binding protein RbsA 2 (506 aa).

2 ABC transporter domains span residues 6–241 (LSMT…VGRV) and 254–499 (EKSN…SITI). 38 to 45 (GENGAGKS) is an ATP binding site.

Belongs to the ABC transporter superfamily. Ribose importer (TC 3.A.1.2.1) family. The complex is composed of an ATP-binding protein (RbsA), two transmembrane proteins (RbsC) and a solute-binding protein (RbsB).

Its subcellular location is the cell inner membrane. It carries out the reaction D-ribose(out) + ATP + H2O = D-ribose(in) + ADP + phosphate + H(+). Its function is as follows. Part of the ABC transporter complex RbsABC involved in ribose import. Responsible for energy coupling to the transport system. This chain is Ribose import ATP-binding protein RbsA 2, found in Agrobacterium fabrum (strain C58 / ATCC 33970) (Agrobacterium tumefaciens (strain C58)).